The chain runs to 635 residues: Probable potassium transport system protein Kup (635 aa).

Helical transmembrane passes span 22-42, 59-79, 111-131, 148-168, 180-200, 216-236, 259-279, 297-317, 349-369, 378-398, 404-424, and 428-448; these read LVIGAIGVVFGDIGTSPLYTL, VLGILSLVFWALMLVVTLKYV, MYVVGILGIFGASLFFGDGVI, APKLEAFVVPITLVVLGMLFL, AFGPITLVWFFALGAIGVYNM, VLFFVEHNWHAVFVLGAVVLA, WQFVVLPMLTLTYLGQGALVL, ALYPMIVLATAATVIASQALI, IYVPAVNWCLLLAVAVAVVGF, AYGVSVTGTMLITTVLMVIYA, VPAPLLWLFALVFLAVDCAFF, and IIKFLDGAWFPLLLGLILFTL.

The protein belongs to the HAK/KUP transporter (TC 2.A.72) family.

It is found in the cell inner membrane. It carries out the reaction K(+)(in) + H(+)(in) = K(+)(out) + H(+)(out). In terms of biological role, transport of potassium into the cell. Likely operates as a K(+):H(+) symporter. This is Probable potassium transport system protein Kup from Xanthomonas oryzae pv. oryzae (strain KACC10331 / KXO85).